The chain runs to 106 residues: Small cardioactive peptide-related peptide (106 aa).

An N-terminal signal peptide occupies residues 1 to 20 (MFCKHLSFVAITICFLLVLA). The propeptide at 21 to 41 (KTENEIQQKNIKFDQRTWRNM) is amino-terminal spacer peptide. Glutamine 52 carries the glutamine amide modification. The propeptide at 55-106 (SDNQPDYTCCGMPLTKYVGICPIGMECCPGLKKVLQKSGQRTIYSVCVADAY) is carboxy-terminal spacer peptide.

Expression is seen in the peripheral and central nervous systems in tissues such as the brain, the inferior buccal ganglion, the gastric ganglion, the olfactory lobe, the peduncle lobe and the optic lobe. Expression in the brain is distributed in the median inferior frontal lobe, the superior buccal lobe, the prebranchial lobe and the pedal lobe. Not expressed in the vasomotor lobe or the palliovisceral lobe that controls the cardiac system.

The protein resides in the secreted. Functionally, evokes contractions in the radula protractor muscle, and may regulate feeding behavior and gut motility by controlling muscle contraction of the buccal mass. In Octopus vulgaris (Common octopus), this protein is Small cardioactive peptide-related peptide.